A 342-amino-acid polypeptide reads, in one-letter code: S-adenosylmethionine:tRNA ribosyltransferase-isomerase (342 aa).

It belongs to the QueA family. In terms of assembly, monomer.

It is found in the cytoplasm. It catalyses the reaction 7-aminomethyl-7-carbaguanosine(34) in tRNA + S-adenosyl-L-methionine = epoxyqueuosine(34) in tRNA + adenine + L-methionine + 2 H(+). The protein operates within tRNA modification; tRNA-queuosine biosynthesis. Its function is as follows. Transfers and isomerizes the ribose moiety from AdoMet to the 7-aminomethyl group of 7-deazaguanine (preQ1-tRNA) to give epoxyqueuosine (oQ-tRNA). The chain is S-adenosylmethionine:tRNA ribosyltransferase-isomerase from Streptococcus mutans serotype c (strain ATCC 700610 / UA159).